Reading from the N-terminus, the 223-residue chain is Deoxyribose-phosphate aldolase (223 aa).

Aspartate 91 serves as the catalytic Proton donor/acceptor. Catalysis depends on lysine 154, which acts as the Schiff-base intermediate with acetaldehyde. Catalysis depends on lysine 183, which acts as the Proton donor/acceptor.

It belongs to the DeoC/FbaB aldolase family. DeoC type 1 subfamily.

The protein localises to the cytoplasm. The enzyme catalyses 2-deoxy-D-ribose 5-phosphate = D-glyceraldehyde 3-phosphate + acetaldehyde. It participates in carbohydrate degradation; 2-deoxy-D-ribose 1-phosphate degradation; D-glyceraldehyde 3-phosphate and acetaldehyde from 2-deoxy-alpha-D-ribose 1-phosphate: step 2/2. In terms of biological role, catalyzes a reversible aldol reaction between acetaldehyde and D-glyceraldehyde 3-phosphate to generate 2-deoxy-D-ribose 5-phosphate. The chain is Deoxyribose-phosphate aldolase from Geobacillus kaustophilus (strain HTA426).